The primary structure comprises 226 residues: Cytidylate kinase (226 aa).

Position 10–18 (10–18 (GPASSGKST)) interacts with ATP.

The protein belongs to the cytidylate kinase family. Type 1 subfamily.

The protein localises to the cytoplasm. The enzyme catalyses CMP + ATP = CDP + ADP. It carries out the reaction dCMP + ATP = dCDP + ADP. This Streptococcus pyogenes serotype M28 (strain MGAS6180) protein is Cytidylate kinase.